The chain runs to 447 residues: Signal recognition particle 54 kDa protein (447 aa).

GTP is bound by residues 103–110 (GVQGSGKT), 185–189 (DTAGR), and 245–248 (TKMD).

Belongs to the GTP-binding SRP family. SRP54 subfamily. In terms of assembly, part of the signal recognition particle protein translocation system, which is composed of SRP and FtsY. Archaeal SRP consists of a 7S RNA molecule of 300 nucleotides and two protein subunits: SRP54 and SRP19.

The protein localises to the cytoplasm. The enzyme catalyses GTP + H2O = GDP + phosphate + H(+). In terms of biological role, involved in targeting and insertion of nascent membrane proteins into the cytoplasmic membrane. Binds to the hydrophobic signal sequence of the ribosome-nascent chain (RNC) as it emerges from the ribosomes. The SRP-RNC complex is then targeted to the cytoplasmic membrane where it interacts with the SRP receptor FtsY. The protein is Signal recognition particle 54 kDa protein of Saccharolobus islandicus (strain M.16.27) (Sulfolobus islandicus).